The chain runs to 728 residues: Catalase-peroxidase 1 (728 aa).

Residues 1 to 22 (MDKTQSSQGKCPVMHGANSAVA) form the signal peptide. Residues 97–225 (WHSAGTYRVA…LAAVMMGLIY (129 aa)) constitute a cross-link (tryptophyl-tyrosyl-methioninium (Trp-Tyr) (with M-251)). The Proton acceptor role is filled by His98. The segment at residues 225–251 (YVNPEGVDGKPDPLRTAQDVRVTFARM) is a cross-link (tryptophyl-tyrosyl-methioninium (Tyr-Met) (with W-97)). Heme b is bound at residue His266.

This sequence belongs to the peroxidase family. Peroxidase/catalase subfamily. As to quaternary structure, homodimer or homotetramer. The cofactor is heme b. Post-translationally, formation of the three residue Trp-Tyr-Met cross-link is important for the catalase, but not the peroxidase activity of the enzyme.

The enzyme catalyses H2O2 + AH2 = A + 2 H2O. The catalysed reaction is 2 H2O2 = O2 + 2 H2O. Bifunctional enzyme with both catalase and broad-spectrum peroxidase activity. The protein is Catalase-peroxidase 1 of Shewanella sp. (strain MR-4).